A 156-amino-acid chain; its full sequence is D-aminoacyl-tRNA deacylase (156 aa).

Positions 142–143 match the Gly-cisPro motif, important for rejection of L-amino acids motif; the sequence is GP.

The protein belongs to the DTD family. In terms of assembly, homodimer.

The protein resides in the cytoplasm. The enzyme catalyses glycyl-tRNA(Ala) + H2O = tRNA(Ala) + glycine + H(+). It catalyses the reaction a D-aminoacyl-tRNA + H2O = a tRNA + a D-alpha-amino acid + H(+). Functionally, an aminoacyl-tRNA editing enzyme that deacylates mischarged D-aminoacyl-tRNAs. Also deacylates mischarged glycyl-tRNA(Ala), protecting cells against glycine mischarging by AlaRS. Acts via tRNA-based rather than protein-based catalysis; rejects L-amino acids rather than detecting D-amino acids in the active site. By recycling D-aminoacyl-tRNA to D-amino acids and free tRNA molecules, this enzyme counteracts the toxicity associated with the formation of D-aminoacyl-tRNA entities in vivo and helps enforce protein L-homochirality. The protein is D-aminoacyl-tRNA deacylase of Cupriavidus metallidurans (strain ATCC 43123 / DSM 2839 / NBRC 102507 / CH34) (Ralstonia metallidurans).